Consider the following 983-residue polypeptide: Inner tegument protein (983 aa).

An interaction with large tegument protein region spans residues 474-983; sequence LNVNTHFAVQ…TSVSLPPASP (510 aa). The disordered stretch occupies residues 901–932; it reads APWESAPQPPRLRMTPDTDHEESTAGATSVPE. Over residues 914–923 the composition is skewed to basic and acidic residues; that stretch reads MTPDTDHEES.

The protein belongs to the herpesviridae inner tegument protein family. Interacts (via C-terminus) with the large tegument protein/LTP (via N-terminus).

Its subcellular location is the virion tegument. It localises to the host cytoplasm. The protein localises to the host nucleus. It is found in the host Golgi apparatus. The protein resides in the host trans-Golgi network. In terms of biological role, plays an essential role in cytoplasmic secondary envelopment during viral egress. Interacts with the capsid via the large tegument protein/LTP and participates in its transport to the host trans-Golgi network (TGN) where secondary envelopment occurs. Modulates tegumentation and capsid accumulation at the viral assembly complex. This chain is Inner tegument protein (UL47), found in Homo sapiens (Human).